We begin with the raw amino-acid sequence, 475 residues long: MSDIRHALLRRDPLSAAKEVLYHLDISLGSALQSSAGPPAGLEKSTVELVEEFIFHVSKDRNIQSKRMSCVQELQLLEIICSYFQEQSKDAIRQVIFSALFSLQGNKADESRMAMLGKLVSMSIAVCRVPILECAAIWLQRTHSAWCVRLAQVLMEDYCTLVPCAISTLQNICSASPRFCCQLITAVTALYDFSTDELTPPPALLEMLVGWITEDPRLLLLTFINSPLNSSLPLGCLEITPLLGLLRWCVKAPLAYHRGRKSAMTNGHGDGEKGTAYEELYSKLHLSVLQVFLMLQVHLTEKNMFCRLTVLPVESVAALIEEVGRLCEKLAPLLDASHIQLALDRLAQALQVAMATGALLCAREDLRALCSRLPHNNLLQLVMSGPVVQPPPHSSPFQPNMYPHIHPGRPSPLSPHSPHQSTLSSPHSPHTVLTAHPTHPALAPHRPLTAHATHPALSPHAFHPASIAFPYRPIR.

A disordered region spans residues Y402–P444. Residues H416 to H430 show a composition bias toward low complexity.

It belongs to the Integrator subunit 15 family. In terms of assembly, component of the Integrator complex, composed of core subunits INTS1, INTS2, INTS3, INTS4, INTS5, INTS6, INTS7, INTS8, INTS9/RC74, INTS10, INTS11/CPSF3L, INTS12, INTS13, INTS14 and INTS15. The core complex associates with protein phosphatase 2A subunits PPP2CA and PPP2R1A, to form the Integrator-PP2A (INTAC) complex. INTS15 is part of the tail subcomplex, composed of INTS10, INTS13, INTS14 and INTS15.

Its subcellular location is the nucleus. The protein resides in the chromosome. Its function is as follows. Component of the integrator complex, a multiprotein complex that terminates RNA polymerase II (Pol II) transcription in the promoter-proximal region of genes. The integrator complex provides a quality checkpoint during transcription elongation by driving premature transcription termination of transcripts that are unfavorably configured for transcriptional elongation: the complex terminates transcription by (1) catalyzing dephosphorylation of the C-terminal domain (CTD) of Pol II subunit POLR2A/RPB1 and SUPT5H/SPT5, (2) degrading the exiting nascent RNA transcript via endonuclease activity and (3) promoting the release of Pol II from bound DNA. The integrator complex is also involved in terminating the synthesis of non-coding Pol II transcripts, such as enhancer RNAs (eRNAs), small nuclear RNAs (snRNAs), telomerase RNAs and long non-coding RNAs (lncRNAs). INTS15 is part of the integrator tail module that acts as a platform for the recruitment of transcription factors at promoters. Within the integrator complex, INTS15 is required to bridge different integrator modules. In Danio rerio (Zebrafish), this protein is Integrator complex subunit 15 (ints15).